Consider the following 154-residue polypeptide: Lipoprotein signal peptidase (154 aa).

2 helical membrane passes run 55 to 75 (GHMW…IYIM) and 84 to 104 (LFSI…IDRV). Active-site residues include Asp111 and Asp129. The helical transmembrane segment at 124–144 (IFNVADASLSVGVVLMLVYVF) threads the bilayer.

Belongs to the peptidase A8 family.

It localises to the cell membrane. The enzyme catalyses Release of signal peptides from bacterial membrane prolipoproteins. Hydrolyzes -Xaa-Yaa-Zaa-|-(S,diacylglyceryl)Cys-, in which Xaa is hydrophobic (preferably Leu), and Yaa (Ala or Ser) and Zaa (Gly or Ala) have small, neutral side chains.. It participates in protein modification; lipoprotein biosynthesis (signal peptide cleavage). Functionally, this protein specifically catalyzes the removal of signal peptides from prolipoproteins. The protein is Lipoprotein signal peptidase of Listeria welshimeri serovar 6b (strain ATCC 35897 / DSM 20650 / CCUG 15529 / CIP 8149 / NCTC 11857 / SLCC 5334 / V8).